An 82-amino-acid chain; its full sequence is Small ribosomal subunit protein bS18 (82 aa).

Residues 1-10 (MTDTNQNSSR) are compositionally biased toward polar residues. The segment at 1–21 (MTDTNQNSSRRPFHRRRKTCP) is disordered.

The protein belongs to the bacterial ribosomal protein bS18 family. Part of the 30S ribosomal subunit. Forms a tight heterodimer with protein bS6.

Its function is as follows. Binds as a heterodimer with protein bS6 to the central domain of the 16S rRNA, where it helps stabilize the platform of the 30S subunit. The sequence is that of Small ribosomal subunit protein bS18 from Bartonella tribocorum (strain CIP 105476 / IBS 506).